Here is a 2273-residue protein sequence, read N- to C-terminus: Acetyl-CoA carboxylase, mitochondrial (2273 aa).

A mitochondrion-targeting transit peptide spans 1–104 (KGKTITHGQS…RGNIHKHTRL (104 aa)). The region spanning 134–635 (VISKILIANN…STGWLDDLIL (502 aa)) is the Biotin carboxylation domain. Residues 292 to 484 (KTNFVSVPDD…LPATQLQIAM (193 aa)) form the ATP-grasp domain. 332 to 337 (GGGGKG) serves as a coordination point for ATP. Residue R459 is part of the active site. The 75-residue stretch at 763–837 (LEAELNPTQV…EAGDVIAKLT (75 aa)) folds into the Biotinyl-binding domain. An N6-biotinyllysine modification is found at K804. Residues 1532–1867 (PYSVKDWLQP…KRDMSPPLLE (336 aa)) enclose the CoA carboxyltransferase N-terminal domain. The tract at residues 1532 to 2187 (PYSVKDWLQP…EGQVIKRLQK (656 aa)) is carboxyltransferase. CoA-binding residues include R1776, K2080, and R2082. The region spanning 1871–2187 (RWDRDVDFKP…EGQVIKRLQK (317 aa)) is the CoA carboxyltransferase C-terminal domain.

The cofactor is biotin.

The protein resides in the mitochondrion. It carries out the reaction hydrogencarbonate + acetyl-CoA + ATP = malonyl-CoA + ADP + phosphate + H(+). The enzyme catalyses N(6)-biotinyl-L-lysyl-[protein] + hydrogencarbonate + ATP = N(6)-carboxybiotinyl-L-lysyl-[protein] + ADP + phosphate + H(+). The protein operates within lipid metabolism; malonyl-CoA biosynthesis; malonyl-CoA from acetyl-CoA: step 1/1. Catalyzes the rate-limiting reaction in the mitochondrial fatty acid synthesis (FAS) type II pathway. Responsible for the production of the mitochondrial malonyl-CoA, used for the biosynthesis of the cofactor lipoic acid. This protein carries three functions: biotin carboxyl carrier protein, biotin carboxylase, and carboxyltransferase. The polypeptide is Acetyl-CoA carboxylase, mitochondrial (HFA1) (Saccharomyces cerevisiae (strain ATCC 204508 / S288c) (Baker's yeast)).